Reading from the N-terminus, the 92-residue chain is MAKGQSLQDPFLNALRRERVPVSIYLVNGIKLQGQVESFDQFVILLKNTVSQMVYKHAISTVVPSRPFNVSNHQATNAQAGYNAQHDETDEK.

The Sm domain maps to 9 to 68; the sequence is DPFLNALRRERVPVSIYLVNGIKLQGQVESFDQFVILLKNTVSQMVYKHAISTVVPSRPF.

This sequence belongs to the Hfq family. In terms of assembly, homohexamer.

Its function is as follows. RNA chaperone that binds small regulatory RNA (sRNAs) and mRNAs to facilitate mRNA translational regulation in response to envelope stress, environmental stress and changes in metabolite concentrations. Also binds with high specificity to tRNAs. The polypeptide is RNA-binding protein Hfq (Shewanella piezotolerans (strain WP3 / JCM 13877)).